We begin with the raw amino-acid sequence, 230 residues long: Potassium/proton antiporter CemA (230 aa).

Transmembrane regions (helical) follow at residues Leu-7 to Phe-27, Ile-106 to Leu-126, Leu-145 to His-165, and Leu-181 to Leu-201.

The protein belongs to the CemA family.

Its subcellular location is the plastid. It localises to the chloroplast inner membrane. The enzyme catalyses K(+)(in) + H(+)(out) = K(+)(out) + H(+)(in). In terms of biological role, contributes to K(+)/H(+) antiport activity by supporting proton efflux to control proton extrusion and homeostasis in chloroplasts in a light-dependent manner to modulate photosynthesis. Prevents excessive induction of non-photochemical quenching (NPQ) under continuous-light conditions. Indirectly promotes efficient inorganic carbon uptake into chloroplasts. The protein is Potassium/proton antiporter CemA of Oryza nivara (Indian wild rice).